The following is a 216-amino-acid chain: MASKGIDKTIYFVRHGQVSHDVDENGVHREHDPLLNDEGRKQALQLQHDLDAEKLPIELILVSPMRRALETMKIGFQHYIEDKHIPVKVIPLLQDCGDWACNVGSYTKDLEKQFPGYDYTACHEDPVFPKKEKIYKADYKTSIQRSRVLAEFFAKVPEKVFAVVTHGVDIRLFQKIQKPEDSLDAVPKEHSFSPCQHEEFRMHYEDDKNWNFEPVK.

The Tele-phosphohistidine intermediate role is filled by H15.

The protein belongs to the phosphoglycerate mutase family. BPG-dependent PGAM subfamily.

It is found in the cytoplasm. The protein resides in the nucleus. In Schizosaccharomyces pombe (strain 972 / ATCC 24843) (Fission yeast), this protein is Probable phosphatase SPAC513.02.